The primary structure comprises 88 residues: Small ribosomal subunit protein uS17 (88 aa).

The protein belongs to the universal ribosomal protein uS17 family. Part of the 30S ribosomal subunit.

Its function is as follows. One of the primary rRNA binding proteins, it binds specifically to the 5'-end of 16S ribosomal RNA. This chain is Small ribosomal subunit protein uS17, found in Lactobacillus helveticus (strain DPC 4571).